A 169-amino-acid polypeptide reads, in one-letter code: Peptide deformylase (169 aa).

Fe cation is bound by residues cysteine 91 and histidine 133. Residue glutamate 134 is part of the active site. Histidine 137 is a binding site for Fe cation.

It belongs to the polypeptide deformylase family. The cofactor is Fe(2+).

It carries out the reaction N-terminal N-formyl-L-methionyl-[peptide] + H2O = N-terminal L-methionyl-[peptide] + formate. In terms of biological role, removes the formyl group from the N-terminal Met of newly synthesized proteins. Requires at least a dipeptide for an efficient rate of reaction. N-terminal L-methionine is a prerequisite for activity but the enzyme has broad specificity at other positions. This Hydrogenovibrio crunogenus (strain DSM 25203 / XCL-2) (Thiomicrospira crunogena) protein is Peptide deformylase.